The sequence spans 360 residues: MKASLLNKLEILQDRFEELTALLGDAEVISDQTRFRAYSREYAEVEPVYAAYKEWRKVQDDLEGAQALLKDSDPDLREMAVEEVREAKEQLLTLEAQLQRMLLPKDPNDGRNVFLEIRAGTGGDEAAIFSGDLFRMYSRYAEKRGWRLEILSENEGEHGGYKEIIARVEGENVYGKLKFESGAHRVQRVPETESQGRVHTSACTVAVLPEPDEQAAIEINPADLRVDTYRASGAGGQHVNKTDSAIRITHLPTGIVVECQEERSQHKNRARAMSWLSAKLNDMQTSAAQNALASERKLLVGSGDRSERIRTYNYPQGRVTDHRINLTLYSLDDILSGGVDAVIEPLLAEYQADQLAALGD.

N5-methylglutamine is present on Q237.

Belongs to the prokaryotic/mitochondrial release factor family. Methylated by PrmC. Methylation increases the termination efficiency of RF1.

It localises to the cytoplasm. Peptide chain release factor 1 directs the termination of translation in response to the peptide chain termination codons UAG and UAA. The polypeptide is Peptide chain release factor 1 (Pseudomonas putida (strain ATCC 47054 / DSM 6125 / CFBP 8728 / NCIMB 11950 / KT2440)).